The primary structure comprises 1446 residues: E3 ubiquitin-protein ligase listerin (1446 aa).

HEAT repeat units lie at residues 71–108 (QTRE…LTTD), 115–153 (MLTM…VTNG), 324–361 (SLQK…LLQK), 363–399 (ENPA…TFSD), 413–450 (EILK…WIIE), 630–669 (AENV…AEDE), 684–721 (GDFE…FCDA), 1046–1083 (LRAL…PAFQ), 1107–1144 (SVAR…KLSL), 1165–1202 (LLDL…NALN), and 1251–1289 (FKSM…RLLI). The segment at 1395–1442 (CTICMMTVHQQTHQLPKIKCKQCKNKFHSNCLYKWFESSNQSTCPLCR) adopts an RING-type zinc-finger fold.

This sequence belongs to the LTN1 family. Component of the ribosome quality control complex (RQC), composed of at least the E3 ubiquitin ligase ltn1 and nemf. The complex probably also contains tcf25 as well as vcp/p97 and its ubiquitin-binding cofactors. RQC forms a stable complex with 60S ribosomal subunits.

The protein localises to the cytoplasm. It is found in the cytosol. It catalyses the reaction S-ubiquitinyl-[E2 ubiquitin-conjugating enzyme]-L-cysteine + [acceptor protein]-L-lysine = [E2 ubiquitin-conjugating enzyme]-L-cysteine + N(6)-ubiquitinyl-[acceptor protein]-L-lysine.. It functions in the pathway protein modification; protein ubiquitination. Its function is as follows. E3 ubiquitin-protein ligase. Component of the ribosome quality control complex (RQC), a ribosome-associated complex that mediates ubiquitination and extraction of incompletely synthesized nascent chains for proteasomal degradation. Ubiquitination leads to vcp/p97 recruitment for extraction and degradation of the incomplete translation product. The polypeptide is E3 ubiquitin-protein ligase listerin (Caenorhabditis elegans).